Here is a 43-residue protein sequence, read N- to C-terminus: Metallothionein B (43 aa).

Positions 1 to 16 are beta; that stretch reads SCAGSCKCKNCRCRSC. Positions 2, 6, 8, 11, 13, 16, 20, 21, 23, 24, 28, 31, 35, and 37 each coordinate a divalent metal cation. The tract at residues 17–43 is alpha; the sequence is RKSCCSCCPAGCNNCVKGCVCKEPASS.

This sequence belongs to the metallothionein superfamily. Type 1 family.

Its function is as follows. Metallothioneins have a high content of cysteine residues that bind various heavy metals. In Colinus virginianus (Northern bobwhite), this protein is Metallothionein B.